The following is a 269-amino-acid chain: uncharacterized protein (269 aa).

4 helical membrane passes run 64–84, 125–145, 169–189, and 230–250; these read FVYF…LAGV, YGIA…FLSF, FFIS…FLVL, and VFAT…IAIF.

The protein localises to the cell membrane. This is an uncharacterized protein from Mycoplasma genitalium (strain ATCC 33530 / DSM 19775 / NCTC 10195 / G37) (Mycoplasmoides genitalium).